Reading from the N-terminus, the 601-residue chain is Elongation factor 4 (601 aa).

The region spanning 8-189 (EQIRNFGIIA…LIVRKAPPPK (182 aa)) is the tr-type G domain. 20–25 (DHGKST) provides a ligand contact to GTP.

This sequence belongs to the TRAFAC class translation factor GTPase superfamily. Classic translation factor GTPase family. LepA subfamily.

It localises to the cell membrane. The catalysed reaction is GTP + H2O = GDP + phosphate + H(+). Its function is as follows. Required for accurate and efficient protein synthesis under certain stress conditions. May act as a fidelity factor of the translation reaction, by catalyzing a one-codon backward translocation of tRNAs on improperly translocated ribosomes. Back-translocation proceeds from a post-translocation (POST) complex to a pre-translocation (PRE) complex, thus giving elongation factor G a second chance to translocate the tRNAs correctly. Binds to ribosomes in a GTP-dependent manner. The protein is Elongation factor 4 of Tropheryma whipplei (strain Twist) (Whipple's bacillus).